A 1792-amino-acid chain; its full sequence is D-lysergyl-peptide-synthetase subunit 3 (1792 aa).

Residues 239–642 form an adenylation (A) domain region; sequence FRQRCDLHPN…GRKDSQIKIR (404 aa). Positions 779-853 constitute a Carrier domain; it reads SNEEHRLQRM…DLARKASQSV (75 aa). S813 is modified (O-(pantetheine 4'-phosphoryl)serine). Positions 895 to 1285 are condensation (C) domain; the sequence is EDIYPCTPMQ…HILGQIHGKE (391 aa). Residues 1415-1640 form a reductase (R) domain region; it reads VTGANGFIGT…AGEFNSSAGS (226 aa).

This sequence belongs to the NRP synthetase family.

Its pathway is alkaloid biosynthesis; ergot alkaloid biosynthesis. Functionally, D-lysergyl-peptide-synthetase subunit 3; part of the gene cluster that mediates the biosynthesis of fungal ergot alkaloid. DmaW catalyzes the first step of ergot alkaloid biosynthesis by condensing dimethylallyl diphosphate (DMAP) and tryptophan to form 4-dimethylallyl-L-tryptophan. The second step is catalyzed by the methyltransferase easF that methylates 4-dimethylallyl-L-tryptophan in the presence of S-adenosyl-L-methionine, resulting in the formation of 4-dimethylallyl-L-abrine. The catalase easC and the FAD-dependent oxidoreductase easE then transform 4-dimethylallyl-L-abrine to chanoclavine-I which is further oxidized by easD in the presence of NAD(+), resulting in the formation of chanoclavine-I aldehyde. Agroclavine dehydrogenase easG then mediates the conversion of chanoclavine-I aldehyde to agroclavine via a non-enzymatic adduct reaction: the substrate is an iminium intermediate that is formed spontaneously from chanoclavine-I aldehyde in the presence of glutathione. The presence of easA is not required to complete this reaction. Further conversion of agroclavine to paspalic acid is a two-step process involving oxidation of agroclavine to elymoclavine and of elymoclavine to paspalic acid, the second step being performed by the elymoclavine oxidase cloA. Paspalic acid is then further converted to D-lysergic acid. Ergopeptines are assembled from D-lysergic acid and three different amino acids by the D-lysergyl-peptide-synthetases composed each of a monomudular and a trimodular nonribosomal peptide synthetase subunit. LpsB and lpsC encode the monomodular subunits responsible for D-lysergic acid activation and incorporation into the ergopeptine backbone. LpsA1 and A2 subunits encode the trimodular nonribosomal peptide synthetase assembling the tripeptide portion of ergopeptines. LpsA1 is responsible for formation of the major ergopeptine, ergotamine, and lpsA2 for alpha-ergocryptine, the minor ergopeptine of the total alkaloid mixture elaborated by C.purpurea. D-lysergyl-tripeptides are assembled by the nonribosomal peptide synthetases and released as N-(D-lysergyl-aminoacyl)-lactams. Cyclolization of the D-lysergyl-tripeptides is performed by the Fe(2+)/2-ketoglutarate-dependent dioxygenase easH which introduces a hydroxyl group into N-(D-lysergyl-aminoacyl)-lactam at alpha-C of the aminoacyl residue followed by spontaneous condensation with the terminal lactam carbonyl group. The protein is D-lysergyl-peptide-synthetase subunit 3 of Claviceps purpurea (strain 20.1) (Ergot fungus).